The sequence spans 314 residues: Olfactory receptor 4Q2 (314 aa).

The Extracellular portion of the chain corresponds to 1 to 26 (MDKNQTEVMREFFLSGFSQTPSIEAG). An N-linked (GlcNAc...) asparagine glycan is attached at N4. Residues 27–47 (LFVLFLFFYMSIWVGNVLIMV) traverse the membrane as a helical segment. Over 48–61 (TVASDKYLNSSPMY) the chain is Cytoplasmic. The helical transmembrane segment at 62–84 (FLLGNLSFLDLCYSTVTTPKLLA) threads the bilayer. Over 85-98 (DFFNHEKLISYDQC) the chain is Extracellular. C98 and C181 form a disulfide bridge. A helical membrane pass occupies residues 99-119 (IVQLFFLHFVGAAEMFLLTVM). Topologically, residues 120–142 (AYDRYVAICRPLHYTTVMSRGLC) are cytoplasmic. A helical transmembrane segment spans residues 143–163 (CVLVAASWMGGFVHSTVQTIL). At 164–196 (TVHLPFCGPNQVENTFFCDVPPVIKLACADTFV) the chain is on the extracellular side. A helical transmembrane segment spans residues 197-217 (IELLMVSNSGLISTISFVVLI). Residues 218–236 (SSYTTILVKIRSKEGRRKA) lie on the Cytoplasmic side of the membrane. A helical transmembrane segment spans residues 237–257 (LSTCASHLMVVTLFFGPCIFI). Topologically, residues 258–268 (YARPFSTFSVD) are extracellular. The chain crosses the membrane as a helical span at residues 269-289 (KMVSVLYNVITPMLNPLIYTL). At 290 to 314 (RNKEVKSAMQKLWVRNGLTWKKQET) the chain is on the cytoplasmic side.

The protein belongs to the G-protein coupled receptor 1 family.

The protein localises to the cell membrane. In terms of biological role, odorant receptor. The sequence is that of Olfactory receptor 4Q2 (OR4Q2) from Homo sapiens (Human).